A 390-amino-acid polypeptide reads, in one-letter code: MNGTRNWCTLVDVHPESQTAGSVDILRLTLQSELTGDELEHIAQKAGRKTYAMMPGHSSGHSLASELVESHDGHEEIIKVYLKGRSGDKMTHEKNIDQLKSEVQYIQEARNCLQKLREDISSKLDRSPGDPLRQQEIQVVLEKPNGFSQSPMTLYSSPPEVDPSMSEDVESLKKTVQELLVKLREAERRHQSDRVAFEVTLSRYQREAEQSNVALQREEDRVEQKAAEIEELQRRLLGMEAEHQALLVKVREGEMALEELRIKNADCQTEREKSAALEKEVAGFREKIHHLDDMLKSQQRKVRQMIEQLQNSKAVIQSKDATIQELKEKIAYLEAENLEMHDRMEHLIEKQVSHGNFSTQARAKTENLGSVRISKPPSPKPMPLIRVVET.

2 coiled-coil regions span residues 88–126 (DKMT…KLDR) and 163–352 (PSMS…EKQV). The segment at 356 to 383 (NFSTQARAKTENLGSVRISKPPSPKPMP) is disordered.

The protein belongs to the tuftelin family. Interacts with TFIP11. May form oligomers. Ameloblasts, and also non-odontogenic tissues including kidney, lung, liver and testis.

The protein resides in the secreted. Functionally, involved in the structural organization of the epidermis. Involved in the mineralization and structural organization of enamel. This chain is Tuftelin (Tuft1), found in Mus musculus (Mouse).